Reading from the N-terminus, the 90-residue chain is Small ribosomal subunit protein bS18 (90 aa).

A compositionally biased stretch (basic and acidic residues) spans 1 to 14 (MARDNGNKDRDGKR). Residues 1 to 23 (MARDNGNKDRDGKRPNGGRNRKM) are disordered.

The protein belongs to the bacterial ribosomal protein bS18 family. Part of the 30S ribosomal subunit. Forms a tight heterodimer with protein bS6.

In terms of biological role, binds as a heterodimer with protein bS6 to the central domain of the 16S rRNA, where it helps stabilize the platform of the 30S subunit. The protein is Small ribosomal subunit protein bS18 of Clostridium acetobutylicum (strain ATCC 824 / DSM 792 / JCM 1419 / IAM 19013 / LMG 5710 / NBRC 13948 / NRRL B-527 / VKM B-1787 / 2291 / W).